The chain runs to 251 residues: Cell division protein ZapD (251 aa).

Belongs to the ZapD family. In terms of assembly, interacts with FtsZ.

The protein resides in the cytoplasm. Functionally, cell division factor that enhances FtsZ-ring assembly. Directly interacts with FtsZ and promotes bundling of FtsZ protofilaments, with a reduction in FtsZ GTPase activity. The protein is Cell division protein ZapD of Burkholderia mallei (strain NCTC 10247).